Here is a 223-residue protein sequence, read N- to C-terminus: Capsid protein (223 aa).

Residues 1–19 (MDDETKKLKNKNKETKEGD) show a composition bias toward basic and acidic residues. The disordered stretch occupies residues 1–21 (MDDETKKLKNKNKETKEGDDV).

Belongs to the closteroviridae capsid protein family. Post-translationally, consists of at least two size variants, CP1 and CP2, which result of post-translational proteolysis at sites approximately 12 to 15 and 26 AA from the N-terminus respectively.

The protein resides in the virion. In Citrus tristeza virus (isolate T36) (CTV), this protein is Capsid protein.